A 288-amino-acid chain; its full sequence is ATP synthase gamma chain (288 aa).

This sequence belongs to the ATPase gamma chain family. F-type ATPases have 2 components, CF(1) - the catalytic core - and CF(0) - the membrane proton channel. CF(1) has five subunits: alpha(3), beta(3), gamma(1), delta(1), epsilon(1). CF(0) has three main subunits: a, b and c.

Its subcellular location is the cell inner membrane. Functionally, produces ATP from ADP in the presence of a proton gradient across the membrane. The gamma chain is believed to be important in regulating ATPase activity and the flow of protons through the CF(0) complex. In Laribacter hongkongensis (strain HLHK9), this protein is ATP synthase gamma chain.